A 1678-amino-acid chain; its full sequence is Nuclear pore complex protein Nup98-Nup96 (1678 aa).

Residues 1-11 (MFGQNKSFGSS) show a composition bias toward low complexity. Disordered stretches follow at residues 1 to 41 (MFGQ…QPAN), 68 to 100 (SSIFGSPQQPQNNQSSLFGGGQNNANRSIFGST), 301 to 366 (TTGS…GAPA), 441 to 473 (FGNTTNTGTGGGLFGSQPQASSGGLFGSNTQAT), and 603 to 631 (SKEAPPSLARGLRNSTFNPNMSLTNRSVH). The span at 12 to 22 (SFGGGSSGSGL) shows a compositional bias: gly residues. Composition is skewed to low complexity over residues 23 to 38 (FGQNNQNNQNKGLFGQ) and 73 to 83 (SPQQPQNNQSS). The span at 306 to 329 (LFGNQQPQTNTGGSLFGNTQNQNQ) shows a compositional bias: polar residues. The segment covering 345–366 (FGQAQQQPQQQSSGFSFGGAPA) has biased composition (low complexity). Polar residues-rich tracts occupy residues 456-473 (SQPQASSGGLFGSNTQAT) and 615-628 (RNSTFNPNMSLTNR). The Peptidase S59 domain maps to 777–919 (KPDYFSLPTI…GSWVFRVDHF (143 aa)). Catalysis depends on S920, which acts as the Nucleophile.

This sequence belongs to the nucleoporin GLFG family. In terms of assembly, part of the NPC. The Nup98 and Nup96 chains are autoproteolytically processed from a single precursor protein.

The protein resides in the cytoplasmic granule. It localises to the nucleus membrane. The protein localises to the nucleus. Its subcellular location is the nuclear pore complex. It is found in the nucleus envelope. The protein resides in the chromosome. Its function is as follows. Nup98 and Nup96 play a role in the bidirectional transport across the nucleoporin complex (NPC). Required for the nuclear import of hcp-4 during mitotic prophase, this step is essential for centrosome assembly and resolution. Regulates nucleoporin npp-5 localization to the nuclear membrane during interphase and to kinetochores during metaphase. Has a role in P granule integrity; may promote the 'liquid phase' of P granules by increasing the number of interacting RNA-protein complexes. Binds nos-2 mRNA, probably indirectly, and promotes its accumulation in P granules. This chain is Nuclear pore complex protein Nup98-Nup96, found in Caenorhabditis elegans.